We begin with the raw amino-acid sequence, 132 residues long: MTMTDPVADMLTRLRNANSAHHDTVSMPHSKLKSHIADILKSEGFIAGWDVADARVGQTLTLSLKFGPDRERSIRGIKRVSKPGLRVYAKSAEIPQVLGGLGVAILSTSSGLLTDRQAAKKGVGGEVLAYVW.

Belongs to the universal ribosomal protein uS8 family. In terms of assembly, part of the 30S ribosomal subunit. Contacts proteins S5 and S12.

Functionally, one of the primary rRNA binding proteins, it binds directly to 16S rRNA central domain where it helps coordinate assembly of the platform of the 30S subunit. The chain is Small ribosomal subunit protein uS8 from Clavibacter michiganensis subsp. michiganensis (strain NCPPB 382).